We begin with the raw amino-acid sequence, 122 residues long: MIGTILAVGFGGFLGAISRMLTSSFFNKIIPHDFPYGTLLVNIIGSFLMGLFFSYASSKGVHIFTKSLISTGFLSAFTTFSTFSYENLLFLQSGDYFHFFLNIILNVILCLLAVWIGFLIFK.

4 helical membrane-spanning segments follow: residues 1–21 (MIGTILAVGFGGFLGAISRML), 34–54 (FPYGTLLVNIIGSFLMGLFFS), 60–80 (GVHIFTKSLISTGFLSAFTTF), and 100–120 (FLNIILNVILCLLAVWIGFLI).

The protein belongs to the fluoride channel Fluc/FEX (TC 1.A.43) family.

It localises to the cell inner membrane. The enzyme catalyses fluoride(in) = fluoride(out). Functionally, fluoride-specific ion channel. Important for reducing fluoride concentration in the cell, thus reducing its toxicity. The chain is Fluoride-specific ion channel FluC from Campylobacter lari (strain RM2100 / D67 / ATCC BAA-1060).